The sequence spans 171 residues: ATP synthase subunit b (171 aa).

Residues F2–L22 traverse the membrane as a helical segment.

It belongs to the ATPase B chain family. As to quaternary structure, F-type ATPases have 2 components, F(1) - the catalytic core - and F(0) - the membrane proton channel. F(1) has five subunits: alpha(3), beta(3), gamma(1), delta(1), epsilon(1). F(0) has three main subunits: a(1), b(2) and c(10-14). The alpha and beta chains form an alternating ring which encloses part of the gamma chain. F(1) is attached to F(0) by a central stalk formed by the gamma and epsilon chains, while a peripheral stalk is formed by the delta and b chains.

It is found in the cell inner membrane. Its function is as follows. F(1)F(0) ATP synthase produces ATP from ADP in the presence of a proton or sodium gradient. F-type ATPases consist of two structural domains, F(1) containing the extramembraneous catalytic core and F(0) containing the membrane proton channel, linked together by a central stalk and a peripheral stalk. During catalysis, ATP synthesis in the catalytic domain of F(1) is coupled via a rotary mechanism of the central stalk subunits to proton translocation. Functionally, component of the F(0) channel, it forms part of the peripheral stalk, linking F(1) to F(0). The sequence is that of ATP synthase subunit b from Helicobacter pylori (strain Shi470).